Reading from the N-terminus, the 165-residue chain is Nucleotide-binding protein RoseRS_0530 (165 aa).

The protein belongs to the YajQ family.

Nucleotide-binding protein. The polypeptide is Nucleotide-binding protein RoseRS_0530 (Roseiflexus sp. (strain RS-1)).